Here is a 146-residue protein sequence, read N- to C-terminus: Hemoglobin subunit beta-2 (146 aa).

One can recognise a Globin domain in the interval 2–146 (GLTAHEKQLI…IADALGKGYH (145 aa)). 2 residues coordinate heme b: histidine 63 and histidine 92.

This sequence belongs to the globin family. As to quaternary structure, heterotetramer of two alpha chains and two beta chains. Red blood cells.

In terms of biological role, involved in oxygen transport from the lung to the various peripheral tissues. The polypeptide is Hemoglobin subunit beta-2 (hbb2) (Xenopus borealis (Kenyan clawed frog)).